Reading from the N-terminus, the 707-residue chain is 65-kDa microtubule-associated protein 3 (707 aa).

5 coiled-coil regions span residues 49 to 84 (LEVY…CSAM), 157 to 179 (NLSM…EKID), 269 to 289 (QQEY…ITEA), 354 to 374 (IVDA…IKEE), and 464 to 486 (LEEY…DQKK). A disordered region spans residues 495–574 (QEALYGSKPS…PSRKQSMNPS (80 aa)). Low complexity predominate over residues 500 to 512 (GSKPSPSKPLGGK). A phosphoserine mark is found at Ser-504 and Ser-528.

It belongs to the MAP65/ASE1 family. As to quaternary structure, forms a dimer. Binds to microtubules (MT) during cell division. Bundles polymerized MT via the formation of 25-nm crossbridges with centrally located endocytic MT, and midline phragmoplast MT. Expressed in all tissues enriched in dividing cells, such as the root and shoot apical meristem, foliar primordia, and young leaves, and embryos.

The protein resides in the nucleus. Its subcellular location is the cytoplasm. It localises to the cytoskeleton. It is found in the phragmoplast. Functionally, microtubule-associated protein that plays a critical role in organizing the mitotic microtubule array during both early and late mitosis in all plant organs. Essential for the cytokinesis, especially in roots, by maintaining the integrity of the overlapped microtubules in the phragmoplast. Required during root morphogenesis. Needed for giant cell development during root knot nematode infection, where cytokinesis is initiated but not completed. The protein is 65-kDa microtubule-associated protein 3 (MAP65-3) of Arabidopsis thaliana (Mouse-ear cress).